Reading from the N-terminus, the 300-residue chain is Energy-coupling factor transporter ATP-binding protein EcfA2 (300 aa).

Positions 3–258 (IKAKNIVKIY…NKFLIENKML (256 aa)) constitute an ABC transporter domain. 40 to 47 (GQTGSGKT) serves as a coordination point for ATP.

This sequence belongs to the ABC transporter superfamily. Energy-coupling factor EcfA family. Forms a stable energy-coupling factor (ECF) transporter complex composed of 2 membrane-embedded substrate-binding proteins (S component), 2 ATP-binding proteins (A component) and 2 transmembrane proteins (T component).

Its subcellular location is the cell membrane. Functionally, ATP-binding (A) component of a common energy-coupling factor (ECF) ABC-transporter complex. Unlike classic ABC transporters this ECF transporter provides the energy necessary to transport a number of different substrates. This chain is Energy-coupling factor transporter ATP-binding protein EcfA2, found in Mesomycoplasma hyopneumoniae (strain 232) (Mycoplasma hyopneumoniae).